A 142-amino-acid polypeptide reads, in one-letter code: Hemoglobin F-I (142 aa).

One can recognise a Globin domain in the interval 2–142 (GLTTAQIKAI…AAGVLVAAMK (141 aa)). His-95 contributes to the heme b binding site.

Belongs to the globin family. As to quaternary structure, homotetramer.

Hemoglobin F-I appears to function in storage, rather than transport of oxygen. This chain is Hemoglobin F-I, found in Urechis caupo (Innkeeper worm).